The sequence spans 265 residues: Aquaporin-5 (265 aa).

Residues 1–12 (MKKEVCSLAFFK) lie on the Cytoplasmic side of the membrane. The helical transmembrane segment at 13–33 (AVFAEFLATLIFVFFGLGSAL) threads the bilayer. The Extracellular segment spans residues 34–39 (KWPSAL). A helical membrane pass occupies residues 40 to 60 (PTILQISIAFGLAIGTLAQAL). At 61–65 (GPVSG) the chain is on the cytoplasmic side. Positions 66–74 (GHINPAITL) form an intramembrane region, discontinuously helical. Residues 69 to 71 (NPA) carry the NPA 1 motif. Residues 75–87 (ALLIGNQISLLRA) are Cytoplasmic-facing. Residues 88 to 108 (VFYVAAQLVGAIAGAGILYWL) form a helical membrane-spanning segment. The Extracellular segment spans residues 109–126 (APLNARGNLAVNALNNNT). N124 carries N-linked (GlcNAc...) asparagine glycosylation. Residues 127–147 (TPGKAMVVELILTFQLALCIF) traverse the membrane as a helical segment. Topologically, residues 148 to 158 (SSTDSRRTSPV) are cytoplasmic. The chain crosses the membrane as a helical span at residues 159–179 (GSPALSIGLSVTLGHLVGIYF). T180 is a topological domain (extracellular). Positions 181-191 (GCSMNPARSFG) form an intramembrane region, discontinuously helical. The NPA 2 motif lies at 185-187 (NPA). Over 192–203 (PAVVMNRFSPSH) the chain is Extracellular. A helical transmembrane segment spans residues 204 to 224 (WVFWVGPIVGAMLAAILYFYL). At 225–265 (LFPSSLSLHDRVAVVKGTYEPEEDWEDHREERKKTIELTAH) the chain is on the cytoplasmic side.

This sequence belongs to the MIP/aquaporin (TC 1.A.8) family. As to quaternary structure, homotetramer; each monomer provides an independent water pore. Interacts with TRPV4; the interaction is probably indirect and regulates TRPV4 activation by hypotonicity. Salivary glands, lacrimal glands, corneal epithelium in eye, trachea and lung.

It is found in the apical cell membrane. Its subcellular location is the cell membrane. The protein resides in the cytoplasmic vesicle membrane. It carries out the reaction H2O(in) = H2O(out). Its function is as follows. Aquaporins form homotetrameric transmembrane channels, with each monomer independently mediating water transport across the plasma membrane along its osmotic gradient. Plays an important role in fluid secretion in salivary glands. Required for TRPV4 activation by hypotonicity. Together with TRPV4, controls regulatory volume decrease in salivary epithelial cells. Seems to play a redundant role in water transport in the eye, lung and in sweat glands. In Rattus norvegicus (Rat), this protein is Aquaporin-5.